The following is a 362-amino-acid chain: Mortality factor 4-like protein 1 (362 aa).

The Tudor-knot domain maps to 12–51; that stretch reads QEGERVLCFHGPLLYEAKCVKVAIKDKQVKYFIHYSGWNK. Positions 26–62 are interaction with KAT8; that stretch reads YEAKCVKVAIKDKQVKYFIHYSGWNKKSAVRPRRSEK. Residues 113–182 form a disordered region; that stretch reads RELQKANQEQ…RKKRARVDPT (70 aa). The interval 133–266 is sufficient for interaction with SIN3A; the sequence is PGKKTSGLQQ…VAGIKEYFNV (134 aa). The short motif at 135-146 is the Nuclear localization signal element; that stretch reads KKTSGLQQKNVE. The residue at position 143 (Lys-143) is an N6-acetyllysine. Positions 164-230 are interaction with RB1-1; that stretch reads STSETPQPPR…FYLPAKKNVD (67 aa). The tract at residues 188–342 is sufficient for interaction with PHF12; sequence TFMNRVEVKV…FLKYLAKNSA (155 aa). An MRG domain is found at 191 to 362; it reads NRVEVKVKIP…APPEYHRKAV (172 aa). The interaction with RB1-2 stretch occupies residues 323–344; the sequence is LALLLNYLHDFLKYLAKNSATL.

Component of the NuA4 histone acetyltransferase complex which contains the catalytic subunit KAT5/TIP60 and the subunits EP400, TRRAP/PAF400, BRD8/SMAP, EPC1, DMAP1/DNMAP1, RUVBL1/TIP49, RUVBL2, ING3, actin, ACTL6A/BAF53A, MORF4L1/MRG15, MORF4L2/MRGX, MRGBP, YEATS4/GAS41, VPS72/YL1 and MEAF6. The NuA4 complex interacts with MYC and the adenovirus E1A protein. MORF4L1 may also participate in the formation of NuA4 related complexes which lack the KAT5/TIP60 catalytic subunit, but which include the SWI/SNF related protein SRCAP. Component of the mSin3A histone deacetylase complex, which includes SIN3A, HDAC2, ARID4B, MORF4L1, RBBP4/RbAp48, and RBBP7/RbAp46. May also interact with PHF12 and one or more as yet undefined members of the TLE (transducin-like enhancer of split) family of transcriptional repressors. Component of the SIN3B complex, which includes SIN3B, HDAC2 or HDAC1, PHF12 and MORF4L1. Interacts with RB1 and KAT8. Interacts with the N-terminus of MRFAP1. Found in a complex composed of MORF4L1, MRFAP1 and RB1. Interacts with the entire BRCA complex, which contains BRCA1, PALB2, BRCA2 and RAD51. Interacts with PALB2. Forms a complex with MSL1 and NUPR1.

It localises to the nucleus. In terms of biological role, component of the NuA4 histone acetyltransferase (HAT) complex which is involved in transcriptional activation of select genes principally by acetylation of nucleosomal histones H4 and H2A. This modification may both alter nucleosome - DNA interactions and promote interaction of the modified histones with other proteins which positively regulate transcription. This complex may be required for the activation of transcriptional programs associated with oncogene and proto-oncogene mediated growth induction, tumor suppressor mediated growth arrest and replicative senescence, apoptosis, and DNA repair. The NuA4 complex ATPase and helicase activities seem to be, at least in part, contributed by the association of RUVBL1 and RUVBL2 with EP400. NuA4 may also play a direct role in DNA repair when directly recruited to sites of DNA damage. As part of the SIN3B complex represses transcription and counteracts the histone acetyltransferase activity of EP300 through the recognition H3K27ac marks by PHF12 and the activity of the histone deacetylase HDAC2. SIN3B complex is recruited downstream of the constitutively active genes transcriptional start sites through interaction with histones and mitigates histone acetylation and RNA polymerase II progression within transcribed regions contributing to the regulation of transcription. Required for homologous recombination repair (HRR) and resistance to mitomycin C (MMC). Involved in the localization of PALB2, BRCA2 and RAD51, but not BRCA1, to DNA-damage foci. The sequence is that of Mortality factor 4-like protein 1 (Morf4l1) from Mus musculus (Mouse).